The chain runs to 325 residues: Serpentine receptor class gamma-16 (325 aa).

Transmembrane regions (helical) follow at residues 25 to 45, 65 to 85, 87 to 107, 144 to 164, 187 to 207, 232 to 252, and 264 to 284; these read FCLY…ILLI, VVSL…MFIP, LCPL…MYYW, LAVT…WNLL, WASL…FTII, FVSL…LIFV, and LLFQ…IIML.

Belongs to the nematode receptor-like protein srg family.

The protein localises to the membrane. The polypeptide is Serpentine receptor class gamma-16 (srg-16) (Caenorhabditis elegans).